The chain runs to 937 residues: Translation initiation factor IF-2 (937 aa).

Disordered stretches follow at residues 157-230 (KEAQ…AARK) and 250-346 (IKAP…ESNF). A compositionally biased stretch (basic and acidic residues) spans 173-205 (EAQKADAAKPVEAKADESAQEEKKRVAAEESKK). The span at 252–265 (APEPAAPVAAKPAE) shows a compositional bias: low complexity. A compositionally biased stretch (basic and acidic residues) spans 267–293 (TLHKPADKKAGEKKDEKKPAVTADKKS). Positions 295 to 304 (KSANVSSTWQ) are enriched in polar residues. The 170-residue stretch at 437-606 (PRAPVVTVMG…LLQAEVLELK (170 aa)) folds into the tr-type G domain. Residues 446–453 (GHVDHGKT) form a G1 region. 446–453 (GHVDHGKT) is a GTP binding site. A G2 region spans residues 471 to 475 (GITQH). The segment at 492 to 495 (DTPG) is G3. GTP contacts are provided by residues 492–496 (DTPGH) and 546–549 (NKID). The segment at 546–549 (NKID) is G4. The tract at residues 582 to 584 (SAK) is G5.

This sequence belongs to the TRAFAC class translation factor GTPase superfamily. Classic translation factor GTPase family. IF-2 subfamily.

The protein resides in the cytoplasm. Its function is as follows. One of the essential components for the initiation of protein synthesis. Protects formylmethionyl-tRNA from spontaneous hydrolysis and promotes its binding to the 30S ribosomal subunits. Also involved in the hydrolysis of GTP during the formation of the 70S ribosomal complex. The polypeptide is Translation initiation factor IF-2 (Janthinobacterium sp. (strain Marseille) (Minibacterium massiliensis)).